The sequence spans 284 residues: Large ribosomal subunit protein uL2 (284 aa).

The interval 232 to 284 (RGTAMNPVDHPHGGGEGRHNGYIPRTPWGKVTKGLKTRDKRKSNKWIVKDRRK) is disordered. Over residues 240–250 (DHPHGGGEGRH) the composition is skewed to basic and acidic residues. Positions 264–284 (KGLKTRDKRKSNKWIVKDRRK) are enriched in basic residues.

This sequence belongs to the universal ribosomal protein uL2 family. Part of the 50S ribosomal subunit. Forms a bridge to the 30S subunit in the 70S ribosome.

Functionally, one of the primary rRNA binding proteins. Required for association of the 30S and 50S subunits to form the 70S ribosome, for tRNA binding and peptide bond formation. It has been suggested to have peptidyltransferase activity; this is somewhat controversial. Makes several contacts with the 16S rRNA in the 70S ribosome. The chain is Large ribosomal subunit protein uL2 from Chlamydia abortus (strain DSM 27085 / S26/3) (Chlamydophila abortus).